A 426-amino-acid chain; its full sequence is D-tagatose-1,6-bisphosphate aldolase subunit KbaZ (426 aa).

This sequence belongs to the GatZ/KbaZ family. KbaZ subfamily. Forms a complex with KbaY.

The protein operates within carbohydrate metabolism; D-tagatose 6-phosphate degradation; D-glyceraldehyde 3-phosphate and glycerone phosphate from D-tagatose 6-phosphate: step 2/2. Its function is as follows. Component of the tagatose-1,6-bisphosphate aldolase KbaYZ that is required for full activity and stability of the Y subunit. Could have a chaperone-like function for the proper and stable folding of KbaY. When expressed alone, KbaZ does not show any aldolase activity. This is D-tagatose-1,6-bisphosphate aldolase subunit KbaZ from Escherichia coli O7:K1 (strain IAI39 / ExPEC).